Consider the following 134-residue polypeptide: Probable 4-amino-4-deoxy-L-arabinose-phosphoundecaprenol flippase subunit ArnF (134 aa).

Topologically, residues 1 to 5 are cytoplasmic; the sequence is MNRRR. Residues 6-26 form a helical membrane-spanning segment; that stretch reads GILFALASVLLVSVAQLSMRW. The Periplasmic portion of the chain corresponds to 27–45; it reads SMTRLPRPDQWLSVPSVDS. The chain crosses the membrane as a helical span at residues 46-66; the sequence is VALAVVLAAIFAYALSMLCWL. The Cytoplasmic segment spans residues 67–77; sequence AALRDLPLGRA. A helical membrane pass occupies residues 78-98; it reads YSLLSISYALVYLLAASLPLF. At 99-101 the chain is on the periplasmic side; the sequence is NES. The chain crosses the membrane as a helical span at residues 102-122; sequence FSFSKSLGVALVMLGVITINT. The Cytoplasmic segment spans residues 123–134; sequence RPARAPELRSSP.

Belongs to the ArnF family. In terms of assembly, heterodimer of ArnE and ArnF.

The protein localises to the cell inner membrane. The protein operates within bacterial outer membrane biogenesis; lipopolysaccharide biosynthesis. Functionally, translocates 4-amino-4-deoxy-L-arabinose-phosphoundecaprenol (alpha-L-Ara4N-phosphoundecaprenol) from the cytoplasmic to the periplasmic side of the inner membrane. The sequence is that of Probable 4-amino-4-deoxy-L-arabinose-phosphoundecaprenol flippase subunit ArnF from Pseudomonas fluorescens (strain Pf0-1).